The following is a 177-amino-acid chain: Phycoerythrin beta subunit (177 aa).

(2R,3E)-phycocyanobilin-binding residues include tyrosine 18, lysine 28, asparagine 35, and aspartate 39. Residues cysteine 50, aspartate 54, and cysteine 61 each coordinate 15,16-dihydrobiliverdin. 4 residues coordinate (2R,3E)-phycocyanobilin: arginine 77, cysteine 82, arginine 84, and aspartate 85. 15,16-dihydrobiliverdin is bound by residues arginine 129, glutamine 148, and lysine 149. Residues proline 154, glycine 156, and cysteine 158 each contribute to the (2R,3E)-phycocyanobilin site.

This sequence belongs to the phycobiliprotein family. In terms of assembly, heterotetramer of 2 identical alpha chains and 2 identical beta chains which form 2 alpha-beta heterodimers within the heterotetramer. The two alpha-beta heterodimers are rotated to an open configuration in contrast to the closed configuration found in other cryptophyte species due to the insertion of a single amino acid, 'Asp-65', in a conserved region of the alpha chain. In the open form, the central chromophores are not in physical contact but are separated by a water-filled channel. In terms of processing, contains three phycocyanobilin chromophores and one 15,16-dihydrobiliverdin chromophore with binding of the phycocyanobilin chromophores mediated by both the alpha and beta subunits.

Its subcellular location is the plastid. The protein localises to the chloroplast thylakoid membrane. Its function is as follows. Light-harvesting photosynthetic bile pigment-protein from the phycobiliprotein complex. This is Phycoerythrin beta subunit from Hemiselmis virescens.